A 210-amino-acid chain; its full sequence is Claudin-4 (210 aa).

Over methionine 1–glutamine 7 the chain is Cytoplasmic. Residues methionine 1–lysine 103 form an interaction with EPHA2 region. A helical membrane pass occupies residues valine 8–proline 28. The Extracellular portion of the chain corresponds to methionine 29 to arginine 81. Cysteine 54 and cysteine 64 are disulfide-bonded. Residues alanine 82–glycine 102 traverse the membrane as a helical segment. The Cytoplasmic segment spans residues lysine 103–threonine 117. A helical transmembrane segment spans residues methionine 118–tryptophan 138. Topologically, residues threonine 139–methionine 160 are extracellular. The helical transmembrane segment at glycine 161–leucine 181 threads the bilayer. At cysteine 182 to valine 210 the chain is on the cytoplasmic side. Position 209 is a phosphotyrosine (tyrosine 209). An interactions with TJP1, TJP2 and TJP3 region spans residues tyrosine 209–valine 210.

The protein belongs to the claudin family. In terms of assembly, can form heteropolymeric strands with other claudins. Interacts with CLDN8. Interacts with CLDN1. Directly interacts with TJP1/ZO-1. Interacts with TJP2/ZO-2 and TJP3/ZO-3. Interacts with EPHA2; phosphorylates CLDN4 and may regulate tight junctions. In terms of processing, phosphorylated. Phosphorylation by EPHA2 is stimulated by EFNA1 and alters interaction with TJP1.

The protein resides in the cell junction. It localises to the tight junction. The protein localises to the cell membrane. It carries out the reaction chloride(in) = chloride(out). The catalysed reaction is bromide(in) = bromide(out). It catalyses the reaction iodide(out) = iodide(in). The enzyme catalyses fluoride(in) = fluoride(out). Its function is as follows. Can associate with other claudins to regulate tight junction structural and functional strand dynamics. May coassemble with CLDN8 into tight junction strands containing anion-selective channels that convey paracellular chloride permeability in renal collecting ducts. May integrate into CLDN3 strands to modulate localized tight junction barrier properties. May disrupt strand assembly of channel-forming CLDN2 and CLDN15 and inhibit cation conductance. Cannot form tight junction strands on its own. This is Claudin-4 (CLDN4) from Canis lupus familiaris (Dog).